The primary structure comprises 45 residues: MFDAFTLVVSQADTRGEMLSTAQIDALSQMVAESNKYLDAVNYIT.

The protein belongs to the phycobiliprotein family. As to quaternary structure, heterodimer of an alpha and a beta subunit. The hererodimer further assembles into trimers and the trimers into hexamers. In terms of processing, contains two covalently linked bilin chromophores.

It is found in the cellular thylakoid membrane. Functionally, light-harvesting photosynthetic bile pigment-protein from the phycobiliprotein complex (phycobilisome, PBS). Phycocyanin is the major phycobiliprotein in the PBS rod. The chain is C-phycocyanin beta subunit (cpcB) from Limnospira fusiformis (Arthrospira fusiformis).